Reading from the N-terminus, the 86-residue chain is Cytochrome c oxidase subunit 3 (86 aa).

The Mitochondrial matrix segment spans residues 1 to 15; sequence MAHQAHSYHMVDPSP. A helical membrane pass occupies residues 16 to 34; that stretch reads WPIFGAAAALLTTSGLVMW. Over 35-40 the chain is Mitochondrial intermembrane; it reads FHYNSS. The helical transmembrane segment at 41–66 threads the bilayer; sequence ILLAAGLLSMLLVMLQWWREIVREST. Residues 67-86 are Mitochondrial matrix-facing; it reads FQGHHTPTVQKGLRYGMILF.

This sequence belongs to the cytochrome c oxidase subunit 3 family. Component of the cytochrome c oxidase (complex IV, CIV), a multisubunit enzyme composed of 14 subunits. The complex is composed of a catalytic core of 3 subunits MT-CO1, MT-CO2 and MT-CO3, encoded in the mitochondrial DNA, and 11 supernumerary subunits COX4I, COX5A, COX5B, COX6A, COX6B, COX6C, COX7A, COX7B, COX7C, COX8 and NDUFA4, which are encoded in the nuclear genome. The complex exists as a monomer or a dimer and forms supercomplexes (SCs) in the inner mitochondrial membrane with NADH-ubiquinone oxidoreductase (complex I, CI) and ubiquinol-cytochrome c oxidoreductase (cytochrome b-c1 complex, complex III, CIII), resulting in different assemblies (supercomplex SCI(1)III(2)IV(1) and megacomplex MCI(2)III(2)IV(2)).

Its subcellular location is the mitochondrion inner membrane. The catalysed reaction is 4 Fe(II)-[cytochrome c] + O2 + 8 H(+)(in) = 4 Fe(III)-[cytochrome c] + 2 H2O + 4 H(+)(out). Functionally, component of the cytochrome c oxidase, the last enzyme in the mitochondrial electron transport chain which drives oxidative phosphorylation. The respiratory chain contains 3 multisubunit complexes succinate dehydrogenase (complex II, CII), ubiquinol-cytochrome c oxidoreductase (cytochrome b-c1 complex, complex III, CIII) and cytochrome c oxidase (complex IV, CIV), that cooperate to transfer electrons derived from NADH and succinate to molecular oxygen, creating an electrochemical gradient over the inner membrane that drives transmembrane transport and the ATP synthase. Cytochrome c oxidase is the component of the respiratory chain that catalyzes the reduction of oxygen to water. Electrons originating from reduced cytochrome c in the intermembrane space (IMS) are transferred via the dinuclear copper A center (CU(A)) of subunit 2 and heme A of subunit 1 to the active site in subunit 1, a binuclear center (BNC) formed by heme A3 and copper B (CU(B)). The BNC reduces molecular oxygen to 2 water molecules using 4 electrons from cytochrome c in the IMS and 4 protons from the mitochondrial matrix. The polypeptide is Cytochrome c oxidase subunit 3 (MT-CO3) (Anas platyrhynchos (Mallard)).